The chain runs to 272 residues: 27-O-demethylrifamycin SV methyltransferase (272 aa).

Residues S89, Q94, 117–118 (DA), L134, and H139 each bind S-adenosyl-L-methionine.

Belongs to the class I-like SAM-binding methyltransferase superfamily. In terms of assembly, exists probably as a trimer.

The catalysed reaction is 27-O-demethylrifamycin SV + S-adenosyl-L-methionine = rifamycin SV + S-adenosyl-L-homocysteine + H(+). Its pathway is antibiotic biosynthesis; rifamycin B biosynthesis. With respect to regulation, slightly inhibited by Ca(2+) and Mg(2+). Strongly inhibited by Zn(2+), Ni(2+) and Co(2+). Its function is as follows. Catalyzes the methylation of 27-O-demethylrifamycin SV (DMRSV) to rifamycin SV. This Amycolatopsis mediterranei (strain S699) (Nocardia mediterranei) protein is 27-O-demethylrifamycin SV methyltransferase.